The sequence spans 253 residues: 3-deoxy-manno-octulosonate cytidylyltransferase (253 aa).

Belongs to the KdsB family.

It is found in the cytoplasm. The enzyme catalyses 3-deoxy-alpha-D-manno-oct-2-ulosonate + CTP = CMP-3-deoxy-beta-D-manno-octulosonate + diphosphate. It participates in nucleotide-sugar biosynthesis; CMP-3-deoxy-D-manno-octulosonate biosynthesis; CMP-3-deoxy-D-manno-octulosonate from 3-deoxy-D-manno-octulosonate and CTP: step 1/1. Its pathway is bacterial outer membrane biogenesis; lipopolysaccharide biosynthesis. Functionally, activates KDO (a required 8-carbon sugar) for incorporation into bacterial lipopolysaccharide in Gram-negative bacteria. The protein is 3-deoxy-manno-octulosonate cytidylyltransferase of Haemophilus ducreyi (strain 35000HP / ATCC 700724).